We begin with the raw amino-acid sequence, 237 residues long: 2-C-methyl-D-erythritol 4-phosphate cytidylyltransferase (237 aa).

The protein belongs to the IspD/TarI cytidylyltransferase family. IspD subfamily.

The enzyme catalyses 2-C-methyl-D-erythritol 4-phosphate + CTP + H(+) = 4-CDP-2-C-methyl-D-erythritol + diphosphate. It participates in isoprenoid biosynthesis; isopentenyl diphosphate biosynthesis via DXP pathway; isopentenyl diphosphate from 1-deoxy-D-xylulose 5-phosphate: step 2/6. Its function is as follows. Catalyzes the formation of 4-diphosphocytidyl-2-C-methyl-D-erythritol from CTP and 2-C-methyl-D-erythritol 4-phosphate (MEP). This Paraburkholderia xenovorans (strain LB400) protein is 2-C-methyl-D-erythritol 4-phosphate cytidylyltransferase.